Reading from the N-terminus, the 185-residue chain is MSKEVLTKSKEKMDKAEQALTRQLGTIRAGRANASLLDRLSVDYYGAPTPVNQMASISVPEARMLLITPYDKTVLGEIEKAILKSDLGLTPNNDGSVLRLSIPQLTEERRKELVKEVKKEAEEAKVAVRNIRREANEELKKLEKNGDITEDDLRSYGEDVQKLTDESIKNIDNITKDKEAEILEV.

The protein belongs to the RRF family.

It localises to the cytoplasm. Functionally, responsible for the release of ribosomes from messenger RNA at the termination of protein biosynthesis. May increase the efficiency of translation by recycling ribosomes from one round of translation to another. The protein is Ribosome-recycling factor of Listeria welshimeri serovar 6b (strain ATCC 35897 / DSM 20650 / CCUG 15529 / CIP 8149 / NCTC 11857 / SLCC 5334 / V8).